The following is a 225-amino-acid chain: Viral late gene transcription factor 3 (225 aa).

A zinc finger spans residues 7–27 (CSNCKHNGLITESNHEFCIFC).

This sequence belongs to the nucleo-cytoplasmic large DNA viruses (NCLDVs) VLTF-3 family. Interacts with the late transcription elongation factor H5/VLTF-4. Interacts with the late transcription factors VLTF-1.

Functionally, acts with RNA polymerase to initiate transcription from late gene promoters. The protein is Viral late gene transcription factor 3 (VLTF3) of Fowlpox virus (strain NVSL) (FPV).